Here is a 372-residue protein sequence, read N- to C-terminus: Bifunctional coenzyme PQQ synthesis protein C/D (372 aa).

The interval 1-267 (MTAQFPPPVP…VAETNSAEDS (267 aa)) is pqqC. The tract at residues 260–288 (ETNSAEDSPAAAASPAATTAEPTAFSGSD) is disordered. Residues 264–283 (AEDSPAAAASPAATTAEPTA) show a composition bias toward low complexity. A linker region spans residues 268–280 (PAAAASPAATTAE). A pqqD region spans residues 281 to 372 (PTAFSGSDVP…GLAQKRVLER (92 aa)).

The protein in the N-terminal section; belongs to the PqqC family. In the C-terminal section; belongs to the PqqD family. As to quaternary structure, monomer. Interacts with PqqE.

The catalysed reaction is 6-(2-amino-2-carboxyethyl)-7,8-dioxo-1,2,3,4,7,8-hexahydroquinoline-2,4-dicarboxylate + 3 O2 = pyrroloquinoline quinone + 2 H2O2 + 2 H2O + H(+). It functions in the pathway cofactor biosynthesis; pyrroloquinoline quinone biosynthesis. Its function is as follows. The PqqC region is involved in ring cyclization and eight-electron oxidation of 3a-(2-amino-2-carboxyethyl)-4,5-dioxo-4,5,6,7,8,9-hexahydroquinoline-7,9-dicarboxylic-acid to PQQ. Functionally, the PqqD region functions as a PqqA binding domain and presents PqqA to PqqE. The sequence is that of Bifunctional coenzyme PQQ synthesis protein C/D (pqqCD) from Methylorubrum extorquens (strain ATCC 14718 / DSM 1338 / JCM 2805 / NCIMB 9133 / AM1) (Methylobacterium extorquens).